Here is a 505-residue protein sequence, read N- to C-terminus: Catalase (505 aa).

A disordered region spans residues 1-25 (MSRQDKKLTGVFGHPVSDRENSMTA). Active-site residues include His-56 and Asn-129. Tyr-339 is a heme binding site.

This sequence belongs to the catalase family. As to quaternary structure, homodimer. Heme is required as a cofactor.

The catalysed reaction is 2 H2O2 = O2 + 2 H2O. In terms of biological role, decomposes hydrogen peroxide into water and oxygen; serves to protect cells from the toxic effects of hydrogen peroxide. The sequence is that of Catalase (katA) from Staphylococcus aureus (strain MRSA252).